The sequence spans 116 residues: Non-specific lipid-transfer protein C, cotyledon-specific isoform (116 aa).

The signal sequence occupies residues 1–24 (MKNVVFSVLLLLSFLFCLANTNEA). 4 cysteine pairs are disulfide-bonded: cysteine 28–cysteine 76, cysteine 38–cysteine 53, cysteine 54–cysteine 98, and cysteine 74–cysteine 112.

The protein belongs to the plant LTP family.

Plant non-specific lipid-transfer proteins transfer phospholipids as well as galactolipids across membranes. May play a role in wax or cutin deposition in the cell walls of expanding epidermal cells and certain secretory tissues. The protein is Non-specific lipid-transfer protein C, cotyledon-specific isoform of Ricinus communis (Castor bean).